The chain runs to 205 residues: Probable nicotinate-nucleotide adenylyltransferase (205 aa).

Belongs to the NadD family.

The catalysed reaction is nicotinate beta-D-ribonucleotide + ATP + H(+) = deamido-NAD(+) + diphosphate. The protein operates within cofactor biosynthesis; NAD(+) biosynthesis; deamido-NAD(+) from nicotinate D-ribonucleotide: step 1/1. In terms of biological role, catalyzes the reversible adenylation of nicotinate mononucleotide (NaMN) to nicotinic acid adenine dinucleotide (NaAD). In Nocardioides sp. (strain ATCC BAA-499 / JS614), this protein is Probable nicotinate-nucleotide adenylyltransferase.